Here is a 568-residue protein sequence, read N- to C-terminus: Proline--tRNA ligase (568 aa).

This sequence belongs to the class-II aminoacyl-tRNA synthetase family. ProS type 1 subfamily. Homodimer.

The protein localises to the cytoplasm. The catalysed reaction is tRNA(Pro) + L-proline + ATP = L-prolyl-tRNA(Pro) + AMP + diphosphate. Catalyzes the attachment of proline to tRNA(Pro) in a two-step reaction: proline is first activated by ATP to form Pro-AMP and then transferred to the acceptor end of tRNA(Pro). As ProRS can inadvertently accommodate and process non-cognate amino acids such as alanine and cysteine, to avoid such errors it has two additional distinct editing activities against alanine. One activity is designated as 'pretransfer' editing and involves the tRNA(Pro)-independent hydrolysis of activated Ala-AMP. The other activity is designated 'posttransfer' editing and involves deacylation of mischarged Ala-tRNA(Pro). The misacylated Cys-tRNA(Pro) is not edited by ProRS. The protein is Proline--tRNA ligase of Alkalilimnicola ehrlichii (strain ATCC BAA-1101 / DSM 17681 / MLHE-1).